Consider the following 370-residue polypeptide: tRNA (guanine(9)-/adenine(9)-N1)-methyltransferase (370 aa).

Positions 87 to 292 constitute an SAM-dependent MTase TRM10-type domain; that stretch reads TPEELREKLP…KELPKRATRY (206 aa).

The protein belongs to the class IV-like SAM-binding methyltransferase superfamily. TRM10 family.

It is found in the cytoplasm. The enzyme catalyses adenosine(9) in tRNA + S-adenosyl-L-methionine = N(1)-methyladenosine(9) in tRNA + S-adenosyl-L-homocysteine + H(+). It carries out the reaction guanosine(9) in tRNA + S-adenosyl-L-methionine = N(1)-methylguanosine(9) in tRNA + S-adenosyl-L-homocysteine + H(+). In terms of biological role, catalyzes the S-adenosyl-L-methionine-dependent formation of either N(1)-methyladenine or N(1)-methylguanine at position 9 (m1A9 or m1G9) in tRNA. This is tRNA (guanine(9)-/adenine(9)-N1)-methyltransferase from Thermococcus kodakarensis (strain ATCC BAA-918 / JCM 12380 / KOD1) (Pyrococcus kodakaraensis (strain KOD1)).